A 549-amino-acid polypeptide reads, in one-letter code: Hydroxylamine reductase (549 aa).

The [4Fe-4S] cluster site is built by Cys5, Cys8, Cys17, and Cys23. Residues His242, Glu266, Cys310, Cys402, Cys430, Cys455, Glu490, and Lys492 each contribute to the hybrid [4Fe-2O-2S] cluster site. At Cys402 the chain carries Cysteine persulfide.

It belongs to the HCP family. Requires [4Fe-4S] cluster as cofactor. The cofactor is hybrid [4Fe-2O-2S] cluster.

It is found in the cytoplasm. The enzyme catalyses A + NH4(+) + H2O = hydroxylamine + AH2 + H(+). Its function is as follows. Catalyzes the reduction of hydroxylamine to form NH(3) and H(2)O. The polypeptide is Hydroxylamine reductase (Clostridium novyi (strain NT)).